A 416-amino-acid polypeptide reads, in one-letter code: Squalene synthase (416 aa).

NADP(+)-binding residues include Arg-52 and Arg-77. Asp-80, Glu-83, and Asp-84 together coordinate Mg(2+). Residue Arg-218 coordinates NADP(+). A helical transmembrane segment spans residues 284–304 (SVFNFCAIPQVMAIATLAACY). Lys-315 and Arg-317 together coordinate NADP(+). Residues 384-404 (PIYLSFIMLLAALSWQYLSTL) form a helical membrane-spanning segment.

The protein belongs to the phytoene/squalene synthase family. Mg(2+) is required as a cofactor.

It is found in the endoplasmic reticulum membrane. The catalysed reaction is 2 (2E,6E)-farnesyl diphosphate + NADPH + H(+) = squalene + 2 diphosphate + NADP(+). It catalyses the reaction 2 (2E,6E)-farnesyl diphosphate + NADH + H(+) = squalene + 2 diphosphate + NAD(+). The enzyme catalyses presqualene diphosphate + NADH + H(+) = squalene + diphosphate + NAD(+). It carries out the reaction presqualene diphosphate + NADPH + H(+) = squalene + diphosphate + NADP(+). The catalysed reaction is 2 (2E,6E)-farnesyl diphosphate = presqualene diphosphate + diphosphate. It functions in the pathway terpene metabolism; lanosterol biosynthesis; lanosterol from farnesyl diphosphate: step 1/3. Its function is as follows. Catalyzes the condensation of 2 farnesyl pyrophosphate (FPP) moieties to form squalene. Proceeds in two distinct steps. In the first half-reaction, two molecules of FPP react to form the stable presqualene diphosphate intermediate (PSQPP), with concomitant release of a proton and a molecule of inorganic diphosphate. In the second half-reaction, PSQPP undergoes heterolysis, isomerization, and reduction with NADPH or NADH to form squalene. It is the first committed enzyme of the sterol biosynthesis pathway. The sequence is that of Squalene synthase (Fdft1) from Mus musculus (Mouse).